The sequence spans 334 residues: Leucine-rich repeat-containing protein 26 (334 aa).

The first 26 residues, 1–26, serve as a signal peptide directing secretion; the sequence is MRGPSWSRPRPLLLLLLLLSPWPVWA. The Extracellular portion of the chain corresponds to 27 to 261; sequence QVSATASPSG…HCAQPLALRD (235 aa). Positions 34 to 71 constitute an LRRNT domain; that stretch reads PSGSLGAPDCPEVCTCVPGGLASCSALSLPAVPPGLSL. Intrachain disulfides connect Cys-43-Cys-49 and Cys-47-Cys-57. LRR repeat units lie at residues 72-93, 96-117, 120-141, 144-167, and 168-190; these read RLRALLLDHNRVRALPPGAFAG, ALQRLDLRENGLHSVHVRAFWG, ALQLLDLSANQLEALAPGTFAP, ALRNLSLAGNRLARLEPAALGALP, and LLRSLSLQDNELAALAPGLLGRL. Asn-147 is a glycosylation site (N-linked (GlcNAc...) asparagine). Residues 201–255 enclose the LRRCT domain; that stretch reads NPWGCGCALRPLCAWLRRHPLPASEAETVLCVWPGRLTLSPLTAFSDAAFSHCAQ. 2 cysteine pairs are disulfide-bonded: Cys-205–Cys-231 and Cys-207–Cys-253. Residues 262–282 traverse the membrane as a helical segment; the sequence is LAVVYTLGPASFLVSLASCLA. Topologically, residues 283–334 are cytoplasmic; that stretch reads LGSGLTACRARRRRLRTAALRPPRPPDPNPDPDPHGCASPADPGSPAAAAQA. Positions 298–334 are disordered; that stretch reads RTAALRPPRPPDPNPDPDPHGCASPADPGSPAAAAQA. Residues 304 to 313 are compositionally biased toward pro residues; sequence PPRPPDPNPD. Residues 320-334 show a composition bias toward low complexity; that stretch reads ASPADPGSPAAAAQA.

Interacts with KCNMA1. As to expression, isoform 1 is expressed highly in normal prostate and salivary gland, very weakly in colon, pancreas, and intestine, and not at all in other tissues. Isoform 1 is expressed highly in many cancer cell lines and in breast cancer, pancreatic cancer and colon cancer. Isoform 2 is expressed in cancer cell lines.

The protein localises to the cell membrane. It localises to the cytoplasm. It is found in the cytoskeleton. Its function is as follows. Auxiliary protein of the large-conductance, voltage and calcium-activated potassium channel (BK alpha). Required for the conversion of BK alpha channels from a high-voltage to a low-voltage activated channel type in non-excitable cells. These are characterized by negative membrane voltages and constant low levels of calcium. The sequence is that of Leucine-rich repeat-containing protein 26 (LRRC26) from Homo sapiens (Human).